The sequence spans 643 residues: MEAVETGERPTFGAWDYGVFALMLLVSTGIGLWVGLARGGQRSAEDFFTGGRRLAALPVGLSLSASFMSAVQVLGVPSEAYRYGLKFLWMCLGQLLNSVLTALLFMPVFYRLGLTSTYEYLEMRFSRAVRLCGTLQYIVATMLYTGIVIYAPALILNQVTGLDIWASLLSTGIICTFYTAVGGMKAVVWTDVFQVVVMLSGFWVVLARGVMLVGGPRQVLTLAQNHSRINLMDFNPDPRSRYTFWTFVVGGTLVWLSMYGVNQAQVQRYVACRTEKQAKLALLINQVGLFLIVSSAACCGIVMFVFYTDCDPLLLGRISAPDQYMPLLVLDIFEDLPGVPGLFLACAYSGTLSTASTSINAMAAVTVEDLIKPRLRSLAPRKLVIISKGLSLIYGSACLTVAALSSLLGGGVLQGSFTVMGVISGPLLGAFILGMFLPACNTPGVLAGLGAGLALSLWVALGATLYPPSEQTMRVLPSSAARCVALSVNASGLLDPALLPANDSSRAPSSGMDASRPALADSFYAISYLYYGALGTLTTVLCGALISCLTGPTKRSTLAPGLLWWDLARQTASVAPKEEVAILDDNLVKGPEELPTGNKKPPGFLPTNEDRLFFLGQKELEGAGSWTPCVGHDGGRDQQETNL.

Topologically, residues 1–14 (MEAVETGERPTFGA) are extracellular. Residues 15 to 31 (WDYGVFALMLLVSTGIG) traverse the membrane as a helical segment. Residues 32–56 (LWVGLARGGQRSAEDFFTGGRRLAA) lie on the Cytoplasmic side of the membrane. Residues 57–80 (LPVGLSLSASFMSAVQVLGVPSEA) form a discontinuously helical membrane-spanning segment. Na(+) contacts are provided by Ser69, Val71, and Gln72. Val76 contacts iodide. At 81-84 (YRYG) the chain is on the extracellular side. The helical transmembrane segment at 85–105 (LKFLWMCLGQLLNSVLTALLF) threads the bilayer. Met90 is an iodide binding site. Over 106-130 (MPVFYRLGLTSTYEYLEMRFSRAVR) the chain is Cytoplasmic. A helical membrane pass occupies residues 131-157 (LCGTLQYIVATMLYTGIVIYAPALILN). Tyr144 is a Na(+) binding site. The Extracellular portion of the chain corresponds to 158–163 (QVTGLD). A helical membrane pass occupies residues 164–181 (IWASLLSTGIICTFYTAV). The Cytoplasmic portion of the chain corresponds to 182–189 (GGMKAVVW). The chain crosses the membrane as a helical span at residues 190–208 (TDVFQVVVMLSGFWVVLAR). Topologically, residues 209 to 243 (GVMLVGGPRQVLTLAQNHSRINLMDFNPDPRSRYT) are extracellular. A discontinuously helical transmembrane segment spans residues 244–266 (FWTFVVGGTLVWLSMYGVNQAQV). Position 255 (Trp255) interacts with iodide. Met258 contacts Na(+). Over 267-278 (QRYVACRTEKQA) the chain is Cytoplasmic. The helical transmembrane segment at 279–301 (KLALLINQVGLFLIVSSAACCGI) threads the bilayer. The Extracellular segment spans residues 302–335 (VMFVFYTDCDPLLLGRISAPDQYMPLLVLDIFED). A helical transmembrane segment spans residues 336–363 (LPGVPGLFLACAYSGTLSTASTSINAMA). The Cytoplasmic segment spans residues 364–386 (AVTVEDLIKPRLRSLAPRKLVII). The helical transmembrane segment at 387-408 (SKGLSLIYGSACLTVAALSSLL) threads the bilayer. Topologically, residues 409–411 (GGG) are extracellular. Residues 412 to 437 (VLQGSFTVMGVISGPLLGAFILGMFL) form a helical membrane-spanning segment. Iodide is bound at residue Leu413. Na(+) is bound by residues Ser416 and Phe417. Residue Phe417 coordinates iodide. Topologically, residues 438-441 (PACN) are cytoplasmic. The chain crosses the membrane as a helical span at residues 442-465 (TPGVLAGLGAGLALSLWVALGATL). Over 466-525 (YPPSEQTMRVLPSSAARCVALSVNASGLLDPALLPANDSSRAPSSGMDASRPALADSFYA) the chain is Extracellular. N-linked (GlcNAc...) asparagine glycans are attached at residues Asn489 and Asn502. A helical membrane pass occupies residues 526–550 (ISYLYYGALGTLTTVLCGALISCLT). Over 551 to 643 (GPTKRSTLAP…GGRDQQETNL (93 aa)) the chain is Cytoplasmic. Ser556 is subject to Phosphoserine; by PKA. A disordered region spans residues 623 to 643 (AGSWTPCVGHDGGRDQQETNL). Positions 633-643 (DGGRDQQETNL) are enriched in basic and acidic residues.

It belongs to the sodium:solute symporter (SSF) (TC 2.A.21) family. In terms of assembly, monomer. In terms of processing, glycosylated. In terms of tissue distribution, expression is primarily in thyroid tissue, but also to a lower extent in mammary gland and ovary. Expression is reduced in tumors.

Its subcellular location is the cell membrane. The protein localises to the cytoplasm. The enzyme catalyses iodide(out) + 2 Na(+)(out) = iodide(in) + 2 Na(+)(in). It carries out the reaction chlorate(out) + 2 Na(+)(out) = chlorate(in) + 2 Na(+)(in). The catalysed reaction is thiocyanate(out) + 2 Na(+)(out) = thiocyanate(in) + 2 Na(+)(in). It catalyses the reaction nitrate(out) + 2 Na(+)(out) = nitrate(in) + 2 Na(+)(in). The enzyme catalyses selenocyanate(out) + 2 Na(+)(out) = selenocyanate(in) + 2 Na(+)(in). Dysidenin and perchlorate inhibit iodide transport activity. Oxyanions inhibit iodide transport activity by blocking the binding sites for iodide and one of the sodium ions. Sodium:iodide symporter that mediates the transport of iodide into the thyroid gland. Can also mediate the transport of chlorate, thiocynate, nitrate and selenocynate. This is Sodium/iodide cotransporter (SLC5A5) from Homo sapiens (Human).